The following is a 126-amino-acid chain: Probable prefoldin subunit 4 (126 aa).

The protein belongs to the prefoldin subunit beta family. As to quaternary structure, heterohexamer of two PFD-alpha type and four PFD-beta type subunits.

Functionally, binds specifically to cytosolic chaperonin (c-CPN) and transfers target proteins to it. Binds to nascent polypeptide chain and promotes folding in an environment in which there are many competing pathways for nonnative proteins. This chain is Probable prefoldin subunit 4 (pfd-4), found in Caenorhabditis elegans.